We begin with the raw amino-acid sequence, 397 residues long: G2/mitotic-specific cyclin-B1 (397 aa).

Residues 1 to 17 show a composition bias toward polar residues; the sequence is MALRVTRNTRLASSENQ. The interval 1–30 is disordered; it reads MALRVTRNTRLASSENQGALPGKAAVANKP.

This sequence belongs to the cyclin family. Cyclin AB subfamily. In terms of assembly, interacts with the CDK1 protein kinase to form a serine/threonine kinase holoenzyme complex also known as maturation promoting factor (MPF). The cyclin subunit imparts substrate specificity to the complex.

Essential for the control of the cell cycle at the G2/M (mitosis) transition. This chain is G2/mitotic-specific cyclin-B1 (ccnb1), found in Carassius auratus (Goldfish).